A 320-amino-acid polypeptide reads, in one-letter code: Rhomboid-like protein 17, chloroplastic (320 aa).

The N-terminal 87 residues, 1–87 (MHAIFSSFSR…LKFGNVMESR (87 aa)), are a transit peptide targeting the chloroplast. A run of 5 helical transmembrane segments spans residues 116–136 (WING…AVFT), 160–180 (LITS…MIGI), 199–219 (LYFA…ALLA), 247–267 (MFAI…YFAL), and 295–315 (IASS…WARI).

It belongs to the peptidase S54 family.

It is found in the plastid. The protein resides in the chloroplast membrane. Probable rhomboid-type serine protease that catalyzes intramembrane proteolysis. In Arabidopsis thaliana (Mouse-ear cress), this protein is Rhomboid-like protein 17, chloroplastic.